A 190-amino-acid chain; its full sequence is Ribosome maturation factor RimM (190 aa).

The region spanning 114–190 (DDEYYWVDLI…CITVDWQPDY (77 aa)) is the PRC barrel domain.

It belongs to the RimM family. As to quaternary structure, binds ribosomal protein uS19.

It is found in the cytoplasm. Its function is as follows. An accessory protein needed during the final step in the assembly of 30S ribosomal subunit, possibly for assembly of the head region. Essential for efficient processing of 16S rRNA. May be needed both before and after RbfA during the maturation of 16S rRNA. It has affinity for free ribosomal 30S subunits but not for 70S ribosomes. The chain is Ribosome maturation factor RimM from Acidovorax sp. (strain JS42).